Reading from the N-terminus, the 261-residue chain is Pimeloyl-[acyl-carrier protein] methyl ester esterase (261 aa).

In terms of domain architecture, AB hydrolase-1 spans His15 to Pro243. Substrate is bound by residues Trp22, Ser83 to Leu84, and Phe144 to Gln148. The active-site Nucleophile is the Ser83. Catalysis depends on residues Asp208 and His236. His236 is a substrate binding site.

The protein belongs to the AB hydrolase superfamily. Carboxylesterase BioH family. In terms of assembly, monomer.

The protein localises to the cytoplasm. The enzyme catalyses 6-carboxyhexanoyl-[ACP] methyl ester + H2O = 6-carboxyhexanoyl-[ACP] + methanol + H(+). Its pathway is cofactor biosynthesis; biotin biosynthesis. Functionally, the physiological role of BioH is to remove the methyl group introduced by BioC when the pimeloyl moiety is complete. It allows to synthesize pimeloyl-ACP via the fatty acid synthetic pathway through the hydrolysis of the ester bonds of pimeloyl-ACP esters. The polypeptide is Pimeloyl-[acyl-carrier protein] methyl ester esterase (Proteus mirabilis (strain HI4320)).